The following is a 381-amino-acid chain: MLPFSMTGLEKDHTRGVLILANAHRRSERSRTASCAGPAVLFGGLITANIVAWAWAFALFADRPVVMATALLAWVFGLRHAVDADHIAAIDNVVRSLMQTGGTPRSAGLYFALGHSSVVVVATMLLALGVVSLGGDGLLKEIGSFIGASVSALFLLVIAAINLAIFASLWRTFRKAREQGIRDAAGLDALLAHRGILVRLLGPMFRLVTKPWHMYPLGFLFGLGFDTATEIGLLSISASEAARGASLADVMVFPALFAAGMALVDTADSTLMVSAYRWAFVDPMRKLWYNLTITGASVAVALFIGGIEALGLIGNRLDLSGGVWTLIDALNESLANVGLAVIALFAIAWLLSIVLYRRLIAGSSGLADTEVLECADATEAV.

Over 1-39 (MLPFSMTGLEKDHTRGVLILANAHRRSERSRTASCAGPA) the chain is Cytoplasmic. The chain crosses the membrane as a helical span at residues 40 to 60 (VLFGGLITANIVAWAWAFALF). The Periplasmic portion of the chain corresponds to 61–63 (ADR). Residues 64–84 (PVVMATALLAWVFGLRHAVDA) form a helical membrane-spanning segment. The Cytoplasmic segment spans residues 85 to 110 (DHIAAIDNVVRSLMQTGGTPRSAGLY). The chain crosses the membrane as a helical span at residues 111 to 131 (FALGHSSVVVVATMLLALGVV). The Periplasmic segment spans residues 132-149 (SLGGDGLLKEIGSFIGAS). The chain crosses the membrane as a helical span at residues 150–170 (VSALFLLVIAAINLAIFASLW). Over 171–215 (RTFRKAREQGIRDAAGLDALLAHRGILVRLLGPMFRLVTKPWHMY) the chain is Cytoplasmic. Residues 216–236 (PLGFLFGLGFDTATEIGLLSI) traverse the membrane as a helical segment. The Periplasmic portion of the chain corresponds to 237–243 (SASEAAR). A helical membrane pass occupies residues 244–264 (GASLADVMVFPALFAAGMALV). Residues 265 to 292 (DTADSTLMVSAYRWAFVDPMRKLWYNLT) are Cytoplasmic-facing. The chain crosses the membrane as a helical span at residues 293–313 (ITGASVAVALFIGGIEALGLI). Residues 314–333 (GNRLDLSGGVWTLIDALNES) are Periplasmic-facing. The chain crosses the membrane as a helical span at residues 334–354 (LANVGLAVIALFAIAWLLSIV). Topologically, residues 355–381 (LYRRLIAGSSGLADTEVLECADATEAV) are cytoplasmic.

The protein belongs to the NiCoT transporter (TC 2.A.52) family.

The protein localises to the cell inner membrane. Involved in nickel incorporation/metabolism into the hydrogenase apoprotein. This Bradyrhizobium diazoefficiens (strain JCM 10833 / BCRC 13528 / IAM 13628 / NBRC 14792 / USDA 110) protein is Hydrogenase nickel incorporation protein HupN (hupN).